Consider the following 757-residue polypeptide: RNA-directed RNA polymerase catalytic subunit (757 aa).

Residues 50–82 (SEKGKWTTNTETGAPQLNPIDGPLPEDNEPSGY) form a disordered region. Positions 55 to 64 (WTTNTETGAP) are enriched in polar residues. Short sequence motifs (nuclear localization signal) lie at residues 187-195 (RKRRVRDNM) and 203-216 (RTIGKKKQRLNKRS). A promoter-binding site region spans residues 249–256 (RGFVYFVE). A RdRp catalytic domain is found at 286–483 (VRKMMTNSQD…GINMSKKKSY (198 aa)).

It belongs to the influenza viruses polymerase PB1 family. Influenza RNA polymerase is composed of three subunits: PB1, PB2 and PA. Interacts (via N-terminus) with PA (via C-terminus). Interacts (via C-terminus) with PB2 (via N-terminus); this interaction is essential for transcription initiation. Post-translationally, phosphorylated by host PRKCA.

Its subcellular location is the host nucleus. The protein localises to the host cytoplasm. The enzyme catalyses RNA(n) + a ribonucleoside 5'-triphosphate = RNA(n+1) + diphosphate. Its function is as follows. RNA-dependent RNA polymerase which is responsible for replication and transcription of virus RNA segments. The transcription of viral mRNAs occurs by a unique mechanism called cap-snatching. 5' methylated caps of cellular mRNAs are cleaved after 10-13 nucleotides by PA. In turn, these short capped RNAs are used as primers by PB1 for transcription of viral mRNAs. During virus replication, PB1 initiates RNA synthesis and copy vRNA into complementary RNA (cRNA) which in turn serves as a template for the production of more vRNAs. In Influenza A virus (strain A/Singapore/1/1957 H2N2), this protein is RNA-directed RNA polymerase catalytic subunit.